The following is a 196-amino-acid chain: Potassium-transporting ATPase KdpC subunit (196 aa).

The helical transmembrane segment at 17–37 (LLLLVATAGLGLVYPLAVFAV) threads the bilayer. Residues 73–93 (QPRPSAAGDGYDPTASGASNL) are disordered.

This sequence belongs to the KdpC family. The system is composed of three essential subunits: KdpA, KdpB and KdpC.

The protein localises to the cell membrane. Part of the high-affinity ATP-driven potassium transport (or Kdp) system, which catalyzes the hydrolysis of ATP coupled with the electrogenic transport of potassium into the cytoplasm. This subunit acts as a catalytic chaperone that increases the ATP-binding affinity of the ATP-hydrolyzing subunit KdpB by the formation of a transient KdpB/KdpC/ATP ternary complex. The protein is Potassium-transporting ATPase KdpC subunit of Kineococcus radiotolerans (strain ATCC BAA-149 / DSM 14245 / SRS30216).